The following is a 250-amino-acid chain: 1-(5-phosphoribosyl)-5-[(5-phosphoribosylamino)methylideneamino] imidazole-4-carboxamide isomerase (250 aa).

The active-site Proton acceptor is the Asp-8. Residue Asp-131 is the Proton donor of the active site.

This sequence belongs to the HisA/HisF family.

Its subcellular location is the cytoplasm. It carries out the reaction 1-(5-phospho-beta-D-ribosyl)-5-[(5-phospho-beta-D-ribosylamino)methylideneamino]imidazole-4-carboxamide = 5-[(5-phospho-1-deoxy-D-ribulos-1-ylimino)methylamino]-1-(5-phospho-beta-D-ribosyl)imidazole-4-carboxamide. It functions in the pathway amino-acid biosynthesis; L-histidine biosynthesis; L-histidine from 5-phospho-alpha-D-ribose 1-diphosphate: step 4/9. The polypeptide is 1-(5-phosphoribosyl)-5-[(5-phosphoribosylamino)methylideneamino] imidazole-4-carboxamide isomerase (Paraburkholderia xenovorans (strain LB400)).